We begin with the raw amino-acid sequence, 240 residues long: Molybdate/tungstate import ATP-binding protein WtpC (240 aa).

The ABC transporter domain occupies 2-227 (FLKVRAEKRL…KNGEVAEFLS (226 aa)). Position 31 to 38 (31 to 38 (GPTGAGKS)) interacts with ATP.

The protein belongs to the ABC transporter superfamily. Sulfate/tungstate importer (TC 3.A.1.6) family. As to quaternary structure, the complex is composed of two ATP-binding proteins (WtpC), two transmembrane proteins (WtpB) and a solute-binding protein (WtpA).

The protein localises to the cell membrane. The catalysed reaction is tungstate(in) + ATP + H2O = tungstate(out) + ADP + phosphate + H(+). In terms of biological role, part of the ABC transporter complex WtpABC involved in molybdate/tungstate import. Responsible for energy coupling to the transport system. This is Molybdate/tungstate import ATP-binding protein WtpC (wtpC) from Archaeoglobus fulgidus (strain ATCC 49558 / DSM 4304 / JCM 9628 / NBRC 100126 / VC-16).